Consider the following 224-residue polypeptide: Triosephosphate isomerase (224 aa).

Position 9–11 (Asn9–Lys11) interacts with substrate. His93 functions as the Electrophile in the catalytic mechanism. Catalysis depends on Glu141, which acts as the Proton acceptor. Residues Ile146, Gly181, and Ala202–Ser203 each bind substrate.

It belongs to the triosephosphate isomerase family. As to quaternary structure, homotetramer; dimer of dimers.

It localises to the cytoplasm. It carries out the reaction D-glyceraldehyde 3-phosphate = dihydroxyacetone phosphate. It participates in carbohydrate biosynthesis; gluconeogenesis. The protein operates within carbohydrate degradation; glycolysis; D-glyceraldehyde 3-phosphate from glycerone phosphate: step 1/1. Functionally, involved in the gluconeogenesis. Catalyzes stereospecifically the conversion of dihydroxyacetone phosphate (DHAP) to D-glyceraldehyde-3-phosphate (G3P). The protein is Triosephosphate isomerase of Pyrobaculum arsenaticum (strain DSM 13514 / JCM 11321 / PZ6).